The following is a 323-amino-acid chain: MVFSSLPVNQFDSQNWQQQGNQHQLECVTTDQNPNNYLRQLSSPPTSQVAGSSQARVNSMVERARIAKVPLPEAALNCPRCDSTNTKFCYFNNYSLTQPRHFCKTCRRYWTRGGSLRNVPVGGGFRRNKRSKSRSKSTVVVSTDNTTSTSSLTSRPSYSNPSKFHSYGQIPEFNSNLPILPPLQSLGDYNSSNTGLDFGGTQISNMISGMSSSGGILDAWRIPPSQQAQQFPFLINTTGLVQSSNALYPLLEGGVSATQTRNVKAEENDQDRGRDGDGVNNLSRNFLGNININSGRNEEYTSWGGNSSWTGFTSNNSTGHLSF.

The segment at 76–130 (LNCPRCDSTNTKFCYFNNYSLTQPRHFCKTCRRYWTRGGSLRNVPVGGGFRRNKR) adopts a Dof-type zinc-finger fold. Residues C78, C81, C103, and C106 each coordinate Zn(2+). Disordered regions lie at residues 121 to 160 (VGGGFRRNKRSKSRSKSTVVVSTDNTTSTSSLTSRPSYSN) and 304 to 323 (GGNSSWTGFTSNNSTGHLSF). The span at 126 to 135 (RRNKRSKSRS) shows a compositional bias: basic residues. The segment covering 136-159 (KSTVVVSTDNTTSTSSLTSRPSYS) has biased composition (low complexity).

As to quaternary structure, interacts with OBF4. As to expression, predominantly expressed in roots.

The protein resides in the nucleus. Its function is as follows. Transcription factor that binds specifically to a 5'-AA[AG]G-3' consensus core sequence. Enhances the DNA binding of OBF transcription factors to OCS elements. The polypeptide is Dof zinc finger protein DOF3.6 (DOF3.6) (Arabidopsis thaliana (Mouse-ear cress)).